The primary structure comprises 311 residues: MEKEFVFGHQNPDTDAIGTAIAFSYLQNKLGYNTEAVALGEPNDETAYALKKFGFEAPRVIKEAAPEVDSVMLVDHNEPQQSVSDIDKVKVTHVVDHHRIMNFNTADPLYYRAEPVGCTSTIVWKMFNENDIEIPEKIAGIMLSAIISDTLLLKSPTTTDDDKEAVEALAKIAGVDYKDYGLAMLKAGTNINDKSEEELIDLDAKSFELNGHNVRVAQINVVDLPEALERKDAFLKAMEKASNDNDYDMFMLLITNILDSDSEALVVGSDETKSFFEKAFDKKLDDSEVKLPGVVSRKKQVVPPLTDAFNA.

Mn(2+) is bound by residues histidine 9, aspartate 13, aspartate 15, aspartate 75, histidine 97, and aspartate 149.

This sequence belongs to the PPase class C family. Mn(2+) serves as cofactor.

It is found in the cytoplasm. The catalysed reaction is diphosphate + H2O = 2 phosphate + H(+). This chain is Probable manganese-dependent inorganic pyrophosphatase, found in Lactobacillus acidophilus (strain ATCC 700396 / NCK56 / N2 / NCFM).